We begin with the raw amino-acid sequence, 134 residues long: uncharacterized protein (134 aa).

This is an uncharacterized protein from Homo sapiens (Human).